Here is a 188-residue protein sequence, read N- to C-terminus: Inner kinetochore subunit cnl2 (188 aa).

Belongs to the NKP2 family. In terms of assembly, component of the inner kinetochore constitutive centromere-associated network (CCAN) (also known as central kinetochore Sim4 complex in fission yeast), which is composed of at least cnl2, cnp3, cnp20, fta1, fta2, fta3, fta4, fta6, fta7, mal2, mhf1, mhf2, mis6, mis15, mis17, sim4 and wip1.

The protein resides in the cytoplasm. It is found in the nucleus. Its subcellular location is the chromosome. The protein localises to the centromere. It localises to the kinetochore. In terms of biological role, component of the kinetochore, a multiprotein complex that assembles on centromeric DNA and attaches chromosomes to spindle microtubules, mediating chromosome segregation and sister chromatid segregation during meiosis and mitosis. Component of the inner kinetochore constitutive centromere-associated network (CCAN), which serves as a structural platform for outer kinetochore assembly. The protein is Inner kinetochore subunit cnl2 (cnl2) of Schizosaccharomyces pombe (strain 972 / ATCC 24843) (Fission yeast).